Reading from the N-terminus, the 350-residue chain is Ion-translocating oxidoreductase complex subunit D (350 aa).

A run of 4 helical transmembrane segments spans residues 20–40 (VMLWVILAALPGLLAQTLFFG), 42–62 (GNLINVVWCIALALGSEAAFL), 89–109 (LPQFTPWWVSGIAVVSAIVVA), and 120–140 (PFNPAMVGYALALISFPVAMT). The residue at position 178 (Thr178) is an FMN phosphoryl threonine. 5 consecutive transmembrane segments (helical) span residues 204-224 (LIARGWEWVNLAFLAGGVLLI), 228-248 (IITWHIPVAFLAGIAAMSLAF), 255-275 (YAPLQLHLLAGGTMLGAFFIA), 282-302 (ATSHQGKLIYGAGIGVLVYLI), and 306-326 (GNYPDAVAFSVLLMNFAVPFI).

This sequence belongs to the NqrB/RnfD family. As to quaternary structure, the complex is composed of six subunits: RnfA, RnfB, RnfC, RnfD, RnfE and RnfG. The cofactor is FMN.

The protein localises to the cell inner membrane. Part of a membrane-bound complex that couples electron transfer with translocation of ions across the membrane. In Marinobacter nauticus (strain ATCC 700491 / DSM 11845 / VT8) (Marinobacter aquaeolei), this protein is Ion-translocating oxidoreductase complex subunit D.